We begin with the raw amino-acid sequence, 633 residues long: Threonine--tRNA ligase (633 aa).

Positions 1–61 (MINIYFNNNL…TENCTFEVIT (61 aa)) constitute a TGS domain. Positions 242–533 (DHRKIGKELE…LIEHHSGKFP (292 aa)) are catalytic. The Zn(2+) site is built by Cys-333, His-384, and His-510.

It belongs to the class-II aminoacyl-tRNA synthetase family. In terms of assembly, homodimer. It depends on Zn(2+) as a cofactor.

The protein localises to the cytoplasm. It carries out the reaction tRNA(Thr) + L-threonine + ATP = L-threonyl-tRNA(Thr) + AMP + diphosphate + H(+). Functionally, catalyzes the attachment of threonine to tRNA(Thr) in a two-step reaction: L-threonine is first activated by ATP to form Thr-AMP and then transferred to the acceptor end of tRNA(Thr). Also edits incorrectly charged L-seryl-tRNA(Thr). The sequence is that of Threonine--tRNA ligase from Ehrlichia canis (strain Jake).